The following is a 304-amino-acid chain: Homoserine kinase (304 aa).

92–102 (PLARGLGSSAT) serves as a coordination point for ATP.

This sequence belongs to the GHMP kinase family. Homoserine kinase subfamily.

The protein localises to the cytoplasm. It catalyses the reaction L-homoserine + ATP = O-phospho-L-homoserine + ADP + H(+). It participates in amino-acid biosynthesis; L-threonine biosynthesis; L-threonine from L-aspartate: step 4/5. Functionally, catalyzes the ATP-dependent phosphorylation of L-homoserine to L-homoserine phosphate. The protein is Homoserine kinase of Nostoc punctiforme (strain ATCC 29133 / PCC 73102).